The following is a 163-amino-acid chain: Peptidyl-prolyl cis-trans isomerase-like 1 (163 aa).

Residues 1–155 (MATDVAVETT…TEVKIVKARV (155 aa)) enclose the PPIase cyclophilin-type domain.

It belongs to the cyclophilin-type PPIase family. PPIL1 subfamily.

It carries out the reaction [protein]-peptidylproline (omega=180) = [protein]-peptidylproline (omega=0). In terms of biological role, PPIases accelerate the folding of proteins. It catalyzes the cis-trans isomerization of proline imidic peptide bonds in oligopeptides. This Neurospora crassa (strain ATCC 24698 / 74-OR23-1A / CBS 708.71 / DSM 1257 / FGSC 987) protein is Peptidyl-prolyl cis-trans isomerase-like 1 (ppi-1).